Consider the following 62-residue polypeptide: Conotoxin TxIC (62 aa).

Positions 1–22 (MHCLPIFVILLLLTASGPSVDA) are cleaved as a signal peptide. A propeptide spanning residues 23 to 47 (QLKTKDDVPLSSFRDHAKSTLRRLQ) is cleaved from the precursor. 2 disulfides stabilise this stretch: Cys52–Cys58 and Cys53–Cys61. Pro60 carries the 4-hydroxyproline modification. Cys61 bears the Cysteine amide mark.

It belongs to the conotoxin A superfamily. Expressed by the venom duct.

The protein resides in the secreted. The polypeptide is Conotoxin TxIC (Conus textile (Cloth-of-gold cone)).